A 108-amino-acid chain; its full sequence is Thioredoxin C-2 (108 aa).

Residues Ser2–Ile108 form the Thioredoxin domain. Cys33 and Cys36 are joined by a disulfide.

The protein belongs to the thioredoxin family.

Participates in various redox reactions through the reversible oxidation of its active center dithiol to a disulfide and catalyzes dithiol-disulfide exchange reactions. This is Thioredoxin C-2 from Corynebacterium nephridii.